Reading from the N-terminus, the 908-residue chain is Magnesium-transporting ATPase, P-type 1 (908 aa).

Over residues 1-20 (MTDMNIENRKLNRPASENDK) the composition is skewed to basic and acidic residues. The segment at 1–21 (MTDMNIENRKLNRPASENDKQ) is disordered. The Cytoplasmic portion of the chain corresponds to 1–80 (MTDMNIENRK…QVPPALIQLL (80 aa)). Residues 81–101 (QAFNNPFIYVLMALAGVSFIT) form a helical membrane-spanning segment. Residues 102 to 113 (DYWLPLRRGEET) lie on the Extracellular side of the membrane. The helical transmembrane segment at 114–134 (DLTGVLIILTMVSLSGLLRFW) threads the bilayer. Residues 135–293 (QEFRTNRAAQ…QTAFDRGVNS (159 aa)) are Cytoplasmic-facing. The helical transmembrane segment at 294–314 (VSWLLIRFMLIMVPVVLLING) threads the bilayer. Residues 315 to 323 (FSKGDWVEA) lie on the Extracellular side of the membrane. Residues 324–341 (SLFALAVAVGLTPEMLPM) traverse the membrane as a helical segment. E337 contributes to the Mg(2+) binding site. Residues 342-704 (IVSSNLAKGA…IKGRETFGNI (363 aa)) are Cytoplasmic-facing. The active-site 4-aspartylphosphate intermediate is D379. Mg(2+) is bound by residues D650, D654, and N718. The helical transmembrane segment at 705–724 (IKYLNMTASSNFGNVFSVLV) threads the bilayer. The Extracellular portion of the chain corresponds to 725-733 (ASAFIPFLP). Residues 734–753 (MLAIHLLIQNLMYDISQLSL) form a helical membrane-spanning segment. Residues N743 and D747 each contribute to the Mg(2+) site. The Cytoplasmic segment spans residues 754–775 (PWDKMDKEFLRKPRKWDAKNIG). A helical membrane pass occupies residues 776–799 (RFMLWIGPTSSIFDITTFALMWYV). At 800–808 (FAANNVEAQ) the chain is on the extracellular side. A helical membrane pass occupies residues 809–827 (ALFQSGWFIEGLLSQTLVV). Residues 828-840 (HMLRTQKIPFIQS) lie on the Cytoplasmic side of the membrane. The chain crosses the membrane as a helical span at residues 841–860 (RATLPVLLTTGLIMAIGIYI). Over 861-875 (PFSPLGAMVGLEPLP) the chain is Extracellular. A helical membrane pass occupies residues 876–895 (LSYFPWLVATLLSYCLVAQG). At 896–908 (MKRFYIKRFGQWF) the chain is on the cytoplasmic side.

The protein belongs to the cation transport ATPase (P-type) (TC 3.A.3) family. Type IIIB subfamily.

It is found in the cell inner membrane. It catalyses the reaction Mg(2+)(out) + ATP + H2O = Mg(2+)(in) + ADP + phosphate + H(+). Functionally, mediates magnesium influx to the cytosol. This Salmonella typhimurium (strain LT2 / SGSC1412 / ATCC 700720) protein is Magnesium-transporting ATPase, P-type 1 (mgtB).